A 79-amino-acid polypeptide reads, in one-letter code: Defensin-like protein 109 (79 aa).

The signal sequence occupies residues 1-24 (MDFTKKILVVFAFTIMLGISSVHC). 4 disulfides stabilise this stretch: Cys41–Cys76, Cys47–Cys68, Cys54–Cys74, and Cys58–Cys75.

It belongs to the DEFL family.

It localises to the secreted. The chain is Defensin-like protein 109 from Arabidopsis thaliana (Mouse-ear cress).